The following is a 178-amino-acid chain: CASP-like protein 5B1 (178 aa).

Topologically, residues 1 to 37 (MDASNPIVHPIGDHHAVDLEEGPLIVTMKELPGMPGT) are cytoplasmic. The chain crosses the membrane as a helical span at residues 38–58 (IGGLALRVGQFLFAAAAIVIM). Over 59-69 (VTGDEFTNYTA) the chain is Extracellular. The N-linked (GlcNAc...) asparagine glycan is linked to N66. A helical membrane pass occupies residues 70–90 (FCYLVAAMSLQFLWSFMLAIL). Over 91 to 104 (DTYALLIKRGLRNS) the chain is Cytoplasmic. The chain crosses the membrane as a helical span at residues 105-125 (VLLSLFVVGDWVTATLSLAAA). Residues 126-154 (CSTAGVTVLFDNDLNYCGQMHCHRYQLSA) lie on the Extracellular side of the membrane. Residues 155–175 (AMAFLSWLLIGMSSLLTFWLW) traverse the membrane as a helical segment. Topologically, residues 176–178 (ASE) are cytoplasmic.

This sequence belongs to the Casparian strip membrane proteins (CASP) family. As to quaternary structure, homodimer and heterodimers.

The protein localises to the cell membrane. This chain is CASP-like protein 5B1, found in Ginkgo biloba (Ginkgo).